The primary structure comprises 360 residues: Cannabinoid receptor 2 (360 aa).

Over 1–33 (MAGCRELELTNGSNGGLEFNPMKEYMILSDAQQ) the chain is Extracellular. A glycan (N-linked (GlcNAc...) asparagine) is linked at Asn11. Residues 34 to 59 (IAVAVLCTLMGLLSALENVAVLYLIL) form a helical membrane-spanning segment. Residues 60-71 (SSQRLRRKPSYL) are Cytoplasmic-facing. The chain crosses the membrane as a helical span at residues 72–92 (FIGSLAGADFLASVIFACNFV). Topologically, residues 93–104 (IFHVFHGVDSRN) are extracellular. Residues 105-129 (IFLLKIGSVTMTFTASVGSLLLTAV) form a helical membrane-spanning segment. The Cytoplasmic portion of the chain corresponds to 130 to 149 (DRYLCLCYPPTYKALVTRGR). A helical transmembrane segment spans residues 150-172 (ALVALGVMWVLSALISYLPLMGW). The Extracellular segment spans residues 173–188 (TCCPSPCSELFPLIPN). Residues 189–214 (DYLLGWLLFIAILFSGIIYTYGYVLW) traverse the membrane as a helical segment. Topologically, residues 215–246 (KAHQHVASLAEHQDRQVPGIARMRLDVRLAKT) are cytoplasmic. The chain crosses the membrane as a helical span at residues 247 to 267 (LGLVMAVLLICWFPALALMGH). At 268 to 279 (SLVTTLSDKVKE) the chain is on the extracellular side. A helical membrane pass occupies residues 280–301 (AFAFCSMLCLVNSMINPIIYAL). Residues 302–360 (RSGEIRSAAQHCLTGWKKYLQGLGSEGKEEAPKSSVTETEAEVKTTTGPGSRTPGCSNC) lie on the Cytoplasmic side of the membrane. The segment at 327–360 (EGKEEAPKSSVTETEAEVKTTTGPGSRTPGCSNC) is disordered. Ser335 and Ser336 each carry phosphoserine. At Thr338 the chain carries Phosphothreonine. Residues 349 to 360 (GPGSRTPGCSNC) show a composition bias toward polar residues. Ser352 is subject to Phosphoserine.

The protein belongs to the G-protein coupled receptor 1 family. Post-translationally, constitutively phosphorylated on Ser-352; phosphorylation increases cell internalization and desensitizes the receptor. Expressed in spleen and brain by neurons and glial cells (at protein level). Expressed in lung, testis and thymus but not in heart, liver or kidney. Expressed in cerebellum, cortex and brainstem.

It is found in the cell membrane. Its subcellular location is the cell projection. The protein resides in the dendrite. The protein localises to the perikaryon. Heterotrimeric G protein-coupled receptor for endocannabinoid 2-arachidonoylglycerol mediating inhibition of adenylate cyclase. May function in inflammatory response, nociceptive transmission and bone homeostasis. The chain is Cannabinoid receptor 2 (Cnr2) from Rattus norvegicus (Rat).